Here is a 221-residue protein sequence, read N- to C-terminus: Retinitis pigmentosa 9 protein (221 aa).

Composition is skewed to basic and acidic residues over residues 1–10 (MSSRPGREDV), 17–29 (RPREPPEQELQRR), and 60–69 (IKEDETKPED). A disordered region spans residues 1–76 (MSSRPGREDV…PEDCIPDVPG (76 aa)). The PIM1-binding stretch occupies residues 1 to 155 (MSSRPGREDV…RDNKRHEKDV (155 aa)). The segment at 104–122 (QCWRCKRYGHRTGDKECPF) adopts a CCHC-type zinc-finger fold. Residue lysine 129 forms a Glycyl lysine isopeptide (Lys-Gly) (interchain with G-Cter in SUMO2) linkage. Basic and acidic residues predominate over residues 147–156 (DNKRHEKDVR). The interval 147–221 (DNKRHEKDVR…SKSNEGSDSE (75 aa)) is disordered. The span at 184-212 (KHKKKKKKEKHKKRKKEKKKKKKRKHKSS) shows a compositional bias: basic residues. A phosphoserine; by PIM1 mark is found at serine 212 and serine 214.

In terms of assembly, binds to PIM1. Binds to ZNHIT4. In terms of tissue distribution, appears to be expressed in a wide range of tissues.

It localises to the nucleus. Its function is as follows. Is thought to be a target protein for the PIM1 kinase. May play some roles in B-cell proliferation in association with PIM1. The sequence is that of Retinitis pigmentosa 9 protein (RP9) from Homo sapiens (Human).